The chain runs to 430 residues: Putative golgin subfamily A member 8D (430 aa).

Positions 2 to 217 (EWKLEQSMRE…LTAQLSLMAL (216 aa)) form a coiled coil. 4 disordered regions span residues 138 to 158 (LREQ…QEER), 217 to 239 (LPGE…RPMP), 290 to 331 (PITK…GVAA), and 382 to 406 (PVQG…QDHQ). Over residues 222–235 (HGGEHLDSEGEEAP) the composition is skewed to basic and acidic residues. Over residues 303 to 316 (PGGGHHQAGPGQGG) the composition is skewed to gly residues.

It belongs to the GOLGA8 family.

In Homo sapiens (Human), this protein is Putative golgin subfamily A member 8D (GOLGA8DP).